Reading from the N-terminus, the 305-residue chain is tRNA dimethylallyltransferase (305 aa).

14–21 (GPTASGKT) contacts ATP. 16 to 21 (TASGKT) contacts substrate. 3 interaction with substrate tRNA regions span residues 39–42 (DSAL), 163–167 (QRIIR), and 243–248 (RCVGYR).

It belongs to the IPP transferase family. In terms of assembly, monomer. It depends on Mg(2+) as a cofactor.

The enzyme catalyses adenosine(37) in tRNA + dimethylallyl diphosphate = N(6)-dimethylallyladenosine(37) in tRNA + diphosphate. Catalyzes the transfer of a dimethylallyl group onto the adenine at position 37 in tRNAs that read codons beginning with uridine, leading to the formation of N6-(dimethylallyl)adenosine (i(6)A). This is tRNA dimethylallyltransferase from Vesicomyosocius okutanii subsp. Calyptogena okutanii (strain HA).